The sequence spans 554 residues: (Z)-gamma-bisabolene synthase 2 (554 aa).

Mg(2+) contacts are provided by Asp306, Asp310, Asp450, and Asp458. Positions 306 to 310 (DDACD) match the DDXXD motif motif.

Belongs to the terpene synthase family. Tpsa subfamily. Mg(2+) serves as cofactor. The cofactor is Mn(2+). In terms of tissue distribution, predominantly expressed in roots. Expressed in the cortex and the sub-epidermal layers of roots. Also detected in leaf hydathodes and flower stigmata.

It localises to the cytoplasm. The enzyme catalyses (2E,6E)-farnesyl diphosphate = (Z)-gamma-bisabolene + diphosphate. It participates in secondary metabolite biosynthesis; terpenoid biosynthesis. Involved in sesquiterpene (C15) biosynthesis. The major product is (Z)-gamma-bisabolene with minor amounts of (E)-nerolidol and alpha-bisabolol. The polypeptide is (Z)-gamma-bisabolene synthase 2 (TPS13) (Arabidopsis thaliana (Mouse-ear cress)).